Here is a 644-residue protein sequence, read N- to C-terminus: 1-deoxy-D-xylulose-5-phosphate synthase (644 aa).

Residues His-84 and Gly-125–Ser-127 each bind thiamine diphosphate. Asp-156 provides a ligand contact to Mg(2+). Thiamine diphosphate is bound by residues Gly-157–Ala-158, Asn-185, Tyr-296, and Glu-378. Asn-185 is a binding site for Mg(2+).

The protein belongs to the transketolase family. DXPS subfamily. As to quaternary structure, homodimer. It depends on Mg(2+) as a cofactor. The cofactor is thiamine diphosphate.

It catalyses the reaction D-glyceraldehyde 3-phosphate + pyruvate + H(+) = 1-deoxy-D-xylulose 5-phosphate + CO2. The protein operates within metabolic intermediate biosynthesis; 1-deoxy-D-xylulose 5-phosphate biosynthesis; 1-deoxy-D-xylulose 5-phosphate from D-glyceraldehyde 3-phosphate and pyruvate: step 1/1. Catalyzes the acyloin condensation reaction between C atoms 2 and 3 of pyruvate and glyceraldehyde 3-phosphate to yield 1-deoxy-D-xylulose-5-phosphate (DXP). The chain is 1-deoxy-D-xylulose-5-phosphate synthase from Paramagnetospirillum magneticum (strain ATCC 700264 / AMB-1) (Magnetospirillum magneticum).